The following is a 277-amino-acid chain: Urease accessory protein UreD (277 aa).

This sequence belongs to the UreD family. As to quaternary structure, ureD, UreF and UreG form a complex that acts as a GTP-hydrolysis-dependent molecular chaperone, activating the urease apoprotein by helping to assemble the nickel containing metallocenter of UreC. The UreE protein probably delivers the nickel.

It is found in the cytoplasm. Its function is as follows. Required for maturation of urease via the functional incorporation of the urease nickel metallocenter. The protein is Urease accessory protein UreD of Pseudomonas putida (strain ATCC 47054 / DSM 6125 / CFBP 8728 / NCIMB 11950 / KT2440).